The chain runs to 172 residues: Adenine phosphoribosyltransferase (172 aa).

It belongs to the purine/pyrimidine phosphoribosyltransferase family. In terms of assembly, homodimer.

Its subcellular location is the cytoplasm. It carries out the reaction AMP + diphosphate = 5-phospho-alpha-D-ribose 1-diphosphate + adenine. The protein operates within purine metabolism; AMP biosynthesis via salvage pathway; AMP from adenine: step 1/1. Its function is as follows. Catalyzes a salvage reaction resulting in the formation of AMP, that is energically less costly than de novo synthesis. The polypeptide is Adenine phosphoribosyltransferase (Clostridium botulinum (strain ATCC 19397 / Type A)).